Here is a 715-residue protein sequence, read N- to C-terminus: Fatty acid oxidation complex subunit alpha (715 aa).

The interval 1–190 (MTTTSAFMLN…RAGLVDDVVP (190 aa)) is enoyl-CoA hydratase. Residues 306–715 (GPLNSVGILG…WTNGETDQGN (410 aa)) form a 3-hydroxyacyl-CoA dehydrogenase region.

This sequence in the N-terminal section; belongs to the enoyl-CoA hydratase/isomerase family. The protein in the central section; belongs to the 3-hydroxyacyl-CoA dehydrogenase family. Heterotetramer of two alpha chains (FadJ) and two beta chains (FadI).

It is found in the cytoplasm. The enzyme catalyses a (3S)-3-hydroxyacyl-CoA = a (2E)-enoyl-CoA + H2O. It catalyses the reaction a 4-saturated-(3S)-3-hydroxyacyl-CoA = a (3E)-enoyl-CoA + H2O. The catalysed reaction is a (3S)-3-hydroxyacyl-CoA + NAD(+) = a 3-oxoacyl-CoA + NADH + H(+). It carries out the reaction (3S)-3-hydroxybutanoyl-CoA = (3R)-3-hydroxybutanoyl-CoA. It functions in the pathway lipid metabolism; fatty acid beta-oxidation. Its function is as follows. Catalyzes the formation of a hydroxyacyl-CoA by addition of water on enoyl-CoA. Also exhibits 3-hydroxyacyl-CoA epimerase and 3-hydroxyacyl-CoA dehydrogenase activities. The protein is Fatty acid oxidation complex subunit alpha of Salmonella schwarzengrund (strain CVM19633).